The chain runs to 620 residues: Siderophore iron transporter ARN2 (620 aa).

The segment at 1 to 42 is disordered; that stretch reads MIEVPEDNRSSQTKRKNTEKNCNELMVDEKMDDDSSPRDEMK. Basic and acidic residues predominate over residues 16 to 42; it reads KNTEKNCNELMVDEKMDDDSSPRDEMK. Helical transmembrane passes span 71-93, 106-128, 135-152, 162-184, 191-213, 223-245, 286-308, 318-335, 355-377, 392-414, 421-438, 448-470, 491-513, and 561-578; these read IFLFSAFICTFAYGLDSSIRGTY, LISTVSVIVLMISAVSQVIFGGL, LTLFLVSIVLYIVGTIIQ, AAGAVFYYVGLVGVMLQVVLMLS, WRLFYTLIPSWPSIITTWVSGSV, WSWNIAMWAFIFPLCCIPLILCM, VVGVLLFTAGVGCILVPLTLAGG, IIGPFVLGFVLVPGFIYW, VWAPLGIMFFICFVYQMAAGYLY, TRIINLYSFVTAVVAPFLGLIVT, SYIIFGGSLYFITMGLFY, GGIIAGMVIWGLSSCLFDYPTIV, VFRIGGAVAAAISGAIWTQSLYP, and VIVALVFSAPMFLLTFCV.

This sequence belongs to the major facilitator superfamily.

The protein resides in the endosome membrane. Its function is as follows. Involved in the transport of siderophore triacestylfusarinine C and so has a role in iron homeostasis. The polypeptide is Siderophore iron transporter ARN2 (ARN2) (Saccharomyces cerevisiae (strain ATCC 204508 / S288c) (Baker's yeast)).